A 402-amino-acid chain; its full sequence is uncharacterized protein (402 aa).

Residues 332–402 (MFSSSSSSSE…PEPPPGKPGR (71 aa)) form a disordered region. Residues 370-379 (SETTSLQQYS) are compositionally biased toward polar residues. The segment covering 393 to 402 (PEPPPGKPGR) has biased composition (pro residues).

This is an uncharacterized protein from Mus musculus (Mouse).